We begin with the raw amino-acid sequence, 168 residues long: Cilia- and flagella-associated protein HOATZ (168 aa).

The tract at residues 142–168 is disordered; the sequence is PKDKVPKSKEVLSESGLRDQEEVKALE.

This sequence belongs to the HOATZ family. Specifically expressed in tissues with motile cilia and flagella, such as brain ependyma, lung, testis, and oviduct but not in whole brain, liver,kidney, spleen, and eyeball.

It localises to the cytoplasm. The protein resides in the cell projection. It is found in the cilium. Required for motile ciliogenesis and flagellar genesis by mediating the maturation of the glycolytic enzyme ENO4. The protein is Cilia- and flagella-associated protein HOATZ of Mus musculus (Mouse).